A 407-amino-acid polypeptide reads, in one-letter code: Chorismate synthase (407 aa).

2 residues coordinate NADP(+): arginine 40 and arginine 46. Residues 140–142, 261–262, glycine 305, 320–324, and arginine 346 contribute to the FMN site; these read RSS, QA, and KPIST.

Belongs to the chorismate synthase family. As to quaternary structure, homotetramer. Requires FMNH2 as cofactor.

The enzyme catalyses 5-O-(1-carboxyvinyl)-3-phosphoshikimate = chorismate + phosphate. It participates in metabolic intermediate biosynthesis; chorismate biosynthesis; chorismate from D-erythrose 4-phosphate and phosphoenolpyruvate: step 7/7. Catalyzes the anti-1,4-elimination of the C-3 phosphate and the C-6 proR hydrogen from 5-enolpyruvylshikimate-3-phosphate (EPSP) to yield chorismate, which is the branch point compound that serves as the starting substrate for the three terminal pathways of aromatic amino acid biosynthesis. This reaction introduces a second double bond into the aromatic ring system. This is Chorismate synthase from Corynebacterium glutamicum (strain R).